A 574-amino-acid chain; its full sequence is Choline transporter-like protein ctl1 (574 aa).

Asparagine 40 and asparagine 101 each carry an N-linked (GlcNAc...) asparagine glycan. A run of 8 helical transmembrane segments spans residues 144 to 164 (WGLTFGFLTLALFTYSFLMVW), 189 to 209 (KDAIICMMLSVIWLFCLVAIP), 211 to 231 (FLYFLLASVPLTMFAFAVYLL), 246 to 266 (LMLLTGIILLVAPILLSYYVW), 291 to 311 (QITLIFISFLFSFYVLIFIWV), 336 to 356 (WVLASFYSLHFLWLCTFFHAL), 396 to 416 (YGLCAFSSFLVVITKVPLHFL), and 434 to 456 (TSASYVTSPLTLAYASIYSVPYM). A glycan (N-linked (GlcNAc...) asparagine) is linked at asparagine 457. The next 2 membrane-spanning stretches (helical) occupy residues 485 to 505 (LLAARSLLAIGVGVTSWNYSI) and 511 to 531 (FYGYIVGLLGGFLAWLIIGAI). N-linked (GlcNAc...) asparagine glycosylation is present at asparagine 558.

It belongs to the CTL (choline transporter-like) family. In terms of assembly, interacts with atg9.

It localises to the endoplasmic reticulum membrane. The protein resides in the preautophagosomal structure membrane. In terms of biological role, required for the normal organization of the preautophagosomal structure (PAS) and for the correct subcellular location of atg9. The polypeptide is Choline transporter-like protein ctl1 (ctl1) (Schizosaccharomyces pombe (strain 972 / ATCC 24843) (Fission yeast)).